We begin with the raw amino-acid sequence, 282 residues long: 3-hydroxyanthranilate 3,4-dioxygenase (282 aa).

Positions 1–160 (MAMAINVKKW…SKQYKSGKPD (160 aa)) are domain A (catalytic). Position 43 (R43) interacts with O2. Fe cation is bound by residues H47, E53, and H91. E53 provides a ligand contact to substrate. Residues R95 and E105 each coordinate substrate. The tract at residues 161 to 177 (PDQPKAKMPFCLSTEQV) is linker. The interval 178-282 (MEPFSFQHWL…LSTSQVPLPM (105 aa)) is domain B.

This sequence belongs to the 3-HAO family. In terms of assembly, monomer. The cofactor is Fe(2+).

It localises to the cytoplasm. Its subcellular location is the cytosol. It carries out the reaction 3-hydroxyanthranilate + O2 = (2Z,4Z)-2-amino-3-carboxymuconate 6-semialdehyde. It functions in the pathway cofactor biosynthesis; NAD(+) biosynthesis; quinolinate from L-kynurenine: step 3/3. Functionally, catalyzes the oxidative ring opening of 3-hydroxyanthranilate to 2-amino-3-carboxymuconate semialdehyde, which spontaneously cyclizes to quinolinate. The chain is 3-hydroxyanthranilate 3,4-dioxygenase (haao) from Xenopus laevis (African clawed frog).